The chain runs to 405 residues: Lariat debranching enzyme (405 aa).

A divalent metal cation-binding residues include C11, H13, D40, and N85. The interval 125–159 is lariat recognition loop; sequence SGIWKEWDFNKQRPDWNDLENNNWKANIRNLYHVR. Positions 179, 231, and 233 each coordinate a divalent metal cation. Positions 242-277 are disordered; sequence HNKRSHEPPNKSTSKTKKNNNEIDLDLSSDEDERSG. Over residues 264 to 274 the composition is skewed to acidic residues; it reads IDLDLSSDEDE. Position 269 is a phosphoserine (S269).

Belongs to the lariat debranching enzyme family. Fe(2+) is required as a cofactor. Requires Zn(2+) as cofactor. The cofactor is Mn(2+).

It is found in the nucleus. It localises to the cytoplasm. With respect to regulation, active in presence of diverse metals including Fe(2+), Zn(2+) and Mn(2+). Binds two metal cations in two adjacent alpha and beta metal-binding pockets. The activity is the highest with Fe(2+) bound to the 2 metal-binding sites. Activity is low with Zn(2+) and Mn(2+). Functionally, cleaves the 2'-5' phosphodiester linkage at the branch point of lariat intron pre-mRNAs after splicing and converts them into linear molecules that are subsequently degraded, thereby facilitating ribonucleotide turnover. It also participates in Ty1 retrovirus-like transposition via an RNA lariat intermediate in cDNA synthesis. This is Lariat debranching enzyme (DBR1) from Saccharomyces cerevisiae (strain ATCC 204508 / S288c) (Baker's yeast).